Reading from the N-terminus, the 488-residue chain is Erythromycin resistance ATP-binding protein MsrA (488 aa).

The region spanning 6 to 199 is the ABC transporter 1 domain; that stretch reads IKFNQINHKL…NQYEQEQLEQ (194 aa). 38 to 45 provides a ligand contact to ATP; that stretch reads GGNGTGKT. A Q-linker, rich in Glu and hydrophilic AA region spans residues 200–298; the sequence is QRKYEQYISE…KIYDIHNNYP (99 aa). The disordered stretch occupies residues 211–255; that stretch reads QRLSQASKAKRNQAQQMAQASSKQKNKSIAPDRLSASKEKGTVEK. Low complexity predominate over residues 222-233; that stretch reads NQAQQMAQASSK. Positions 245–255 are enriched in basic and acidic residues; it reads SASKEKGTVEK. Positions 299–487 constitute an ABC transporter 2 domain; the sequence is IIAQNLTLVK…ELTGQSIHDI (189 aa). 331–338 serves as a coordination point for ATP; that stretch reads GANGVGKT.

It belongs to the ABC transporter superfamily.

In terms of biological role, confers resistance to 14-membered ring macrolides (like erythromycin) and to B streptogramins, by acting as an ATP-dependent efflux pump. The polypeptide is Erythromycin resistance ATP-binding protein MsrA (msrA) (Staphylococcus epidermidis).